Reading from the N-terminus, the 1287-residue chain is DENN domain-containing protein 5A (1287 aa).

Positions 57–259 (STTEGENFEQ…EVPLPPPGRS (203 aa)) constitute a uDENN domain. Phosphoserine is present on serine 193. The region spanning 278 to 414 (ELPLFDFPVK…LEFVQEVSEI (137 aa)) is the cDENN domain. In terms of domain architecture, dDENN spans 416-598 (MAFGVPPEGN…IMCHDDDDKD (183 aa)). Residues 787-950 (VEENTLIASL…DYFCFTNVFT (164 aa)) form the RUN 1 domain. The region spanning 954–1062 (IPYHILIVPS…DDGSLERVLV (109 aa)) is the PLAT domain. Residue threonine 1079 is modified to Phosphothreonine. Serine 1085, serine 1087, and serine 1096 each carry phosphoserine. The region spanning 1134–1280 (TLLLCGECGL…QEFNITLDTS (147 aa)) is the RUN 2 domain.

It belongs to the RAB6IP1 family. In terms of assembly, interacts with RAB6A bound to GTP.

The protein localises to the golgi apparatus membrane. Guanine nucleotide exchange factor (GEF) which may activate RAB6A and RAB39A and/or RAB39B. Promotes the exchange of GDP to GTP, converting inactive GDP-bound Rab proteins into their active GTP-bound form. Involved in the negative regulation of neurite outgrowth. The chain is DENN domain-containing protein 5A (Dennd5a) from Mus musculus (Mouse).